Consider the following 290-residue polypeptide: GTPase Era (290 aa).

Residues 2–169 enclose the Era-type G domain; it reads KSGFVSIIGR…KDKIYENLQE (168 aa). The segment at 10–17 is G1; that stretch reads GRPSTGKS. 10 to 17 serves as a coordination point for GTP; the sequence is GRPSTGKS. A G2 region spans residues 36-40; the sequence is QTTRN. The interval 57-60 is G3; the sequence is DTPG. Residues 57-61 and 119-122 each bind GTP; these read DTPGF and NKID. Residues 119–122 form a G4 region; it reads NKID. A G5 region spans residues 148–150; the sequence is ISA. The region spanning 200–276 is the KH type-2 domain; sequence LKEELPYSLY…DLFLQVKLRK (77 aa).

The protein belongs to the TRAFAC class TrmE-Era-EngA-EngB-Septin-like GTPase superfamily. Era GTPase family. In terms of assembly, monomer.

Its subcellular location is the cytoplasm. It is found in the cell inner membrane. In terms of biological role, an essential GTPase that binds both GDP and GTP, with rapid nucleotide exchange. Plays a role in 16S rRNA processing and 30S ribosomal subunit biogenesis and possibly also in cell cycle regulation and energy metabolism. The polypeptide is GTPase Era (Borrelia turicatae (strain 91E135)).